The following is a 230-amino-acid chain: Thioredoxin domain-containing protein PLP3B (230 aa).

Positions valine 89–phenylalanine 173 constitute a Thioredoxin domain. A disordered region spans residues glutamate 199 to aspartate 230. Over residues arginine 220–aspartate 230 the composition is skewed to polar residues.

The protein belongs to the phosducin family. As to quaternary structure, interacts with TUBB2, TUBB3, TUBB4 and TUBB5. Expressed in roots, cotyledons, leaves, stems and flowers.

Its subcellular location is the cytoplasm. The protein localises to the nucleus. Functionally, tubulin-binding protein involved in microtubule formation. This chain is Thioredoxin domain-containing protein PLP3B (PLP3B), found in Arabidopsis thaliana (Mouse-ear cress).